A 364-amino-acid chain; its full sequence is DNA polymerase IV (364 aa).

In terms of domain architecture, UmuC spans 14 to 198 (IIHIDMDAFF…LPIEKFHGVG (185 aa)). 2 residues coordinate Mg(2+): Asp-18 and Asp-116. The active site involves Glu-117.

This sequence belongs to the DNA polymerase type-Y family. As to quaternary structure, monomer. It depends on Mg(2+) as a cofactor.

The protein resides in the cytoplasm. The catalysed reaction is DNA(n) + a 2'-deoxyribonucleoside 5'-triphosphate = DNA(n+1) + diphosphate. Functionally, poorly processive, error-prone DNA polymerase involved in untargeted mutagenesis. Copies undamaged DNA at stalled replication forks, which arise in vivo from mismatched or misaligned primer ends. These misaligned primers can be extended by PolIV. Exhibits no 3'-5' exonuclease (proofreading) activity. May be involved in translesional synthesis, in conjunction with the beta clamp from PolIII. This is DNA polymerase IV from Streptococcus pyogenes serotype M5 (strain Manfredo).